A 211-amino-acid polypeptide reads, in one-letter code: ATP phosphoribosyltransferase (211 aa).

The protein belongs to the ATP phosphoribosyltransferase family. Short subfamily. In terms of assembly, heteromultimer composed of HisG and HisZ subunits.

The protein localises to the cytoplasm. It carries out the reaction 1-(5-phospho-beta-D-ribosyl)-ATP + diphosphate = 5-phospho-alpha-D-ribose 1-diphosphate + ATP. The protein operates within amino-acid biosynthesis; L-histidine biosynthesis; L-histidine from 5-phospho-alpha-D-ribose 1-diphosphate: step 1/9. Its function is as follows. Catalyzes the condensation of ATP and 5-phosphoribose 1-diphosphate to form N'-(5'-phosphoribosyl)-ATP (PR-ATP). Has a crucial role in the pathway because the rate of histidine biosynthesis seems to be controlled primarily by regulation of HisG enzymatic activity. The sequence is that of ATP phosphoribosyltransferase from Bacillus thuringiensis subsp. konkukian (strain 97-27).